The chain runs to 63 residues: Conotoxin PnMRCL-0111 (63 aa).

An N-terminal signal peptide occupies residues 1 to 22; that stretch reads MHCLSVFVILLLLTASAPSVDA. The propeptide occupies 23 to 50; that stretch reads QPKTEDDVPLSSFHDDLQRTVRTLLDIR. Tryptophan 62 bears the Tryptophan amide mark.

It belongs to the conotoxin T superfamily. In terms of processing, contains 2 disulfide bonds that can be either 'C1-C3, C2-C4' or 'C1-C4, C2-C3', since these disulfide connectivities have been observed for conotoxins with cysteine framework V (for examples, see AC P0DQQ7 and AC P81755). Expressed by the venom duct.

It is found in the secreted. The chain is Conotoxin PnMRCL-0111 from Conus pennaceus (Feathered cone).